The sequence spans 208 residues: MRLAVPVSGSTPKTRLASVLSPDERRDFTEAMLADVVDAVTSAGHEPEVISTAPLDCAVPVTVDDRGLDPLVNDLLASTVTDDEGALAVVMADLPLVTRESIERLLAPEADVVLAPGLGGGTNAFVCRHPEFRVDYHGASIRDHRETARDVGASVTEVDSRRLATDIDEPDDLAEVLLHSDGAAADWLKQSGFELTATGGRVDVERFR.

Belongs to the CofC family. As to quaternary structure, homodimer.

It catalyses the reaction (2S)-2-phospholactate + GTP + H(+) = (2S)-lactyl-2-diphospho-5'-guanosine + diphosphate. The protein operates within cofactor biosynthesis; coenzyme F420 biosynthesis. In terms of biological role, guanylyltransferase that catalyzes the activation of (2S)-2-phospholactate (2-PL) as (2S)-lactyl-2-diphospho-5'-guanosine, via the condensation of 2-PL with GTP. It is involved in the biosynthesis of coenzyme F420, a hydride carrier cofactor. This chain is 2-phospho-L-lactate guanylyltransferase, found in Haloarcula marismortui (strain ATCC 43049 / DSM 3752 / JCM 8966 / VKM B-1809) (Halobacterium marismortui).